A 130-amino-acid chain; its full sequence is Histone H2A.2 (130 aa).

2 positions are modified to N6-acetyllysine: K4 and K6. Position 104 is an N5-methylglutamine (Q104). A Glycyl lysine isopeptide (Lys-Gly) (interchain with G-Cter in SUMO) cross-link involves residue K125. Phosphoserine is present on S127. Residues 127–128 (SQ) carry the [ST]-Q motif motif.

The protein belongs to the histone H2A family. The nucleosome is a histone octamer containing two molecules each of H2A, H2B, H3 and H4 assembled in one H3-H4 heterotetramer and two H2A-H2B heterodimers. The octamer wraps approximately 147 bp of DNA. In terms of processing, phosphorylated to form H2AS128ph (gamma-H2A) in response to DNA double-strand breaks (DSBs) generated by exogenous genotoxic agents and by stalled replication forks. Phosphorylation is dependent on the DNA damage checkpoint kinases MEC1/ATR and TEL1/ATM, spreads on either side of a detected DSB site and may mark the surrounding chromatin for recruitment of proteins required for DNA damage signaling and repair. Gamma-H2A is removed from the DNA prior to the strand invasion-primer extension step of the repair process and subsequently dephosphorylated. Dephosphorylation is necessary for efficient recovery from the DNA damage checkpoint. Post-translationally, acetylated by ESA1 to form H2AK4ac and H2AK7ac.

It is found in the nucleus. Its subcellular location is the chromosome. Its function is as follows. Core component of nucleosome which plays a central role in DNA double strand break (DSB) repair. Nucleosomes wrap and compact DNA into chromatin, limiting DNA accessibility to the cellular machineries which require DNA as a template. Histones thereby play a central role in transcription regulation, DNA repair, DNA replication and chromosomal stability. DNA accessibility is regulated via a complex set of post-translational modifications of histones, also called histone code, and nucleosome remodeling. In Meyerozyma guilliermondii (strain ATCC 6260 / CBS 566 / DSM 6381 / JCM 1539 / NBRC 10279 / NRRL Y-324) (Yeast), this protein is Histone H2A.2 (HTA2).